The chain runs to 369 residues: Biglycan (369 aa).

A signal peptide spans 1–16; it reads MCPLWLLTLLLALSQA. Residues 17–37 constitute a propeptide that is removed on maturation; it reads LPFEQKGFWDFTLDDGLLMMN. O-linked (Xyl...) (glycosaminoglycan) serine glycosylation is found at serine 42 and serine 48. 2 disulfides stabilise this stretch: cysteine 64-cysteine 70 and cysteine 68-cysteine 77. LRR repeat units follow at residues 83–103, 104–127, 128–151, 152–172, 173–196, 197–221, 222–242, 243–266, 267–290, 291–313, 314–343, and 344–369; these read KTVP…NNDI, SELR…NNKI, SKIH…KNHL, VEIP…DNRI, RKVP…GNPL, ENSG…EAKL, TGIP…HNKI, QAIE…HNQI, RMIE…NNKL, SRVP…SNNI, TKVG…NNPV, and PYWE…NYKK. Asparagine 271 and asparagine 312 each carry an N-linked (GlcNAc...) asparagine glycan. An intrachain disulfide couples cysteine 322 to cysteine 355.

This sequence belongs to the small leucine-rich proteoglycan (SLRP) family. SLRP class I subfamily. In terms of processing, the two attached glycosaminoglycan chains can be either chondroitin sulfate or dermatan sulfate. As to expression, found in several connective tissues, especially in articular cartilages.

It is found in the secreted. It localises to the extracellular space. Its subcellular location is the extracellular matrix. Functionally, may be involved in collagen fiber assembly. The protein is Biglycan (Bgn) of Mus musculus (Mouse).